We begin with the raw amino-acid sequence, 231 residues long: Protein N-terminal glutamine amidohydrolase (231 aa).

Positions 1–21 (MADDRVAGGATPPPPPPPPPL) are disordered. A compositionally biased stretch (pro residues) spans 11–21 (TPPPPPPPPPL). Active-site residues include Cys33, His89, and Asp108.

Belongs to the NTAQ1 family. In terms of assembly, monomer.

The enzyme catalyses N-terminal L-glutaminyl-[protein] + H2O = N-terminal L-glutamyl-[protein] + NH4(+). Its function is as follows. Mediates the side-chain deamidation of N-terminal glutamine residues to glutamate, an important step in N-end rule pathway of protein degradation. Conversion of the resulting N-terminal glutamine to glutamate renders the protein susceptible to arginylation, polyubiquitination and degradation as specified by the N-end rule. Does not act on substrates with internal or C-terminal glutamine and does not act on non-glutamine residues in any position. The chain is Protein N-terminal glutamine amidohydrolase from Oryza sativa subsp. indica (Rice).